The chain runs to 311 residues: Mediator of RNA polymerase II transcription subunit 27 (311 aa).

The residue at position 132 (S132) is a Phosphoserine. Residue K134 is modified to N6-methyllysine.

Belongs to the Mediator complex subunit 27 family. Component of the Mediator complex, which is composed of MED1, MED4, MED6, MED7, MED8, MED9, MED10, MED11, MED12, MED13, MED13L, MED14, MED15, MED16, MED17, MED18, MED19, MED20, MED21, MED22, MED23, MED24, MED25, MED26, MED27, MED29, MED30, MED31, CCNC, CDK8 and CDC2L6/CDK11. The MED12, MED13, CCNC and CDK8 subunits form a distinct module termed the CDK8 module. Mediator containing the CDK8 module is less active than Mediator lacking this module in supporting transcriptional activation. Individual preparations of the Mediator complex lacking one or more distinct subunits have been variously termed ARC, CRSP, DRIP, PC2, SMCC and TRAP.

Its subcellular location is the nucleus. Functionally, component of the Mediator complex, a coactivator involved in the regulated transcription of nearly all RNA polymerase II-dependent genes. Mediator functions as a bridge to convey information from gene-specific regulatory proteins to the basal RNA polymerase II transcription machinery. Mediator is recruited to promoters by direct interactions with regulatory proteins and serves as a scaffold for the assembly of a functional preinitiation complex with RNA polymerase II and the general transcription factors. The sequence is that of Mediator of RNA polymerase II transcription subunit 27 (Med27) from Mus musculus (Mouse).